A 452-amino-acid chain; its full sequence is AP-4 complex subunit mu-1 (452 aa).

Residues 184–451 form the MHD domain; it reads KNEVFLDVVE…LSHSDAYVIR (268 aa).

It belongs to the adaptor complexes medium subunit family. In terms of assembly, adaptor protein complex 4 (AP-4) is a heterotetramer composed of two large adaptins (epsilon-type subunit AP4E1 and beta-type subunit AP4B1), a medium adaptin (mu-type subunit AP4M1) and a small adaptin (sigma-type AP4S1). Interacts with tyrosine-based sorting signals on the cytoplasmic tail of cargo proteins such as APP, ATG9A, LAMP2 and NAGPA. Interacts with the C-terminal domain of GRID2. Interacts with GRIA1 and GRIA2; the interaction is indirect via CACNG3. Interacts with CACNG3; CACNG3 associates GRIA1 and GRIA2 with the adaptor protein complex 4 (AP-4) to target them to the somatodendritic compartment of neurons. Interacts with HOOK1 and HOOK2; the interactions are direct, mediate the interaction between FTS-Hook-FHIP (FHF) complex and AP-4 and the perinuclear distribution of AP-4.

It is found in the golgi apparatus. It localises to the trans-Golgi network membrane. Its subcellular location is the early endosome. Functionally, component of the adaptor protein complex 4 (AP-4). Adaptor protein complexes are vesicle coat components involved both in vesicle formation and cargo selection. They control the vesicular transport of proteins in different trafficking pathways. AP-4 forms a non clathrin-associated coat on vesicles departing the trans-Golgi network (TGN) and may be involved in the targeting of proteins from the trans-Golgi network (TGN) to the endosomal-lysosomal system. It is also involved in protein sorting to the basolateral membrane in epithelial cells and the proper asymmetric localization of somatodendritic proteins in neurons. Within AP-4, the mu-type subunit AP4M1 is directly involved in the recognition and binding of tyrosine-based sorting signals found in the cytoplasmic part of cargos. The adaptor protein complex 4 (AP-4) may also recognize other types of sorting signal. The sequence is that of AP-4 complex subunit mu-1 from Canis lupus familiaris (Dog).